A 98-amino-acid chain; its full sequence is NADH-ubiquinone oxidoreductase chain 4L (98 aa).

The next 3 helical transmembrane spans lie at 1 to 21 (MSMV…GLLV), 29 to 49 (SLLC…MAIL), and 61 to 81 (IILL…LVMV).

Belongs to the complex I subunit 4L family. As to quaternary structure, core subunit of respiratory chain NADH dehydrogenase (Complex I) which is composed of 45 different subunits.

Its subcellular location is the mitochondrion inner membrane. The catalysed reaction is a ubiquinone + NADH + 5 H(+)(in) = a ubiquinol + NAD(+) + 4 H(+)(out). Its function is as follows. Core subunit of the mitochondrial membrane respiratory chain NADH dehydrogenase (Complex I) which catalyzes electron transfer from NADH through the respiratory chain, using ubiquinone as an electron acceptor. Part of the enzyme membrane arm which is embedded in the lipid bilayer and involved in proton translocation. The protein is NADH-ubiquinone oxidoreductase chain 4L (MT-ND4L) of Lynx canadensis (Canada lynx).